A 466-amino-acid polypeptide reads, in one-letter code: Ribulose bisphosphate carboxylase large chain (466 aa).

Lysine 4 bears the N6,N6,N6-trimethyllysine mark. Substrate-binding residues include asparagine 113 and threonine 163. The active-site Proton acceptor is lysine 165. Lysine 167 provides a ligand contact to substrate. Mg(2+) contacts are provided by lysine 191, aspartate 193, and glutamate 194. N6-carboxylysine is present on lysine 191. The Proton acceptor role is filled by histidine 284. Arginine 285, histidine 317, and serine 369 together coordinate substrate.

This sequence belongs to the RuBisCO large chain family. Type I subfamily. In terms of assembly, heterohexadecamer of 8 large chains and 8 small chains; disulfide-linked. The disulfide link is formed within the large subunit homodimers. Mg(2+) is required as a cofactor. The disulfide bond which can form in the large chain dimeric partners within the hexadecamer appears to be associated with oxidative stress and protein turnover.

It localises to the plastid. The protein resides in the chloroplast. The catalysed reaction is 2 (2R)-3-phosphoglycerate + 2 H(+) = D-ribulose 1,5-bisphosphate + CO2 + H2O. The enzyme catalyses D-ribulose 1,5-bisphosphate + O2 = 2-phosphoglycolate + (2R)-3-phosphoglycerate + 2 H(+). RuBisCO catalyzes two reactions: the carboxylation of D-ribulose 1,5-bisphosphate, the primary event in carbon dioxide fixation, as well as the oxidative fragmentation of the pentose substrate in the photorespiration process. Both reactions occur simultaneously and in competition at the same active site. This is Ribulose bisphosphate carboxylase large chain from Barleria prionitis (Porcupine flower).